A 236-amino-acid polypeptide reads, in one-letter code: Exotoxin type H (236 aa).

The first 32 residues, 1–32, serve as a signal peptide directing secretion; that stretch reads MRYNCRYSHIDKKIYSMIICLSFLLYSNVVQA.

Belongs to the staphylococcal/streptococcal toxin family.

The protein localises to the secreted. Its function is as follows. Mitogenic for human peripheral blood lymphocytes. The protein is Exotoxin type H (speH) of Streptococcus pyogenes serotype M1.